We begin with the raw amino-acid sequence, 557 residues long: Glucose-6-phosphate isomerase (557 aa).

The active-site Proton donor is Glu361. Active-site residues include His392 and Lys520.

The protein belongs to the GPI family.

It localises to the cytoplasm. The enzyme catalyses alpha-D-glucose 6-phosphate = beta-D-fructose 6-phosphate. Its pathway is carbohydrate biosynthesis; gluconeogenesis. It functions in the pathway carbohydrate degradation; glycolysis; D-glyceraldehyde 3-phosphate and glycerone phosphate from D-glucose: step 2/4. Its function is as follows. Catalyzes the reversible isomerization of glucose-6-phosphate to fructose-6-phosphate. The protein is Glucose-6-phosphate isomerase of Acinetobacter venetianus (strain ATCC 31012 / DSM 23050 / BCRC 14357 / CCUG 45561 / CIP 110063 / KCTC 2702 / LMG 19082 / RAG-1).